We begin with the raw amino-acid sequence, 357 residues long: uncharacterized protein (357 aa).

The Radical SAM core domain maps to 27–242 (HFGNTVTFER…VSSVRLNFPK (216 aa)). Residues cysteine 44, cysteine 50, and cysteine 53 each coordinate [4Fe-4S] cluster.

The cofactor is [4Fe-4S] cluster.

This is an uncharacterized protein from Methanocaldococcus jannaschii (strain ATCC 43067 / DSM 2661 / JAL-1 / JCM 10045 / NBRC 100440) (Methanococcus jannaschii).